The primary structure comprises 358 residues: Heme A synthase (358 aa).

8 helical membrane-spanning segments follow: residues 25-45 (LVRY…MVGG), 111-131 (LLAR…WLTG), 141-161 (MLGL…MVAS), 176-196 (IHLT…RGLV), 210-230 (FAGW…LVAG), 269-289 (VQFV…LHAV), 304-324 (TIVL…TLLM), and 326-346 (APLH…AFAV). Residue H273 participates in heme binding. H334 serves as a coordination point for heme.

This sequence belongs to the COX15/CtaA family. Type 2 subfamily. In terms of assembly, interacts with CtaB. Heme b is required as a cofactor.

It is found in the cell membrane. The enzyme catalyses Fe(II)-heme o + 2 A + H2O = Fe(II)-heme a + 2 AH2. It functions in the pathway porphyrin-containing compound metabolism; heme A biosynthesis; heme A from heme O: step 1/1. Catalyzes the conversion of heme O to heme A by two successive hydroxylations of the methyl group at C8. The first hydroxylation forms heme I, the second hydroxylation results in an unstable dihydroxymethyl group, which spontaneously dehydrates, resulting in the formyl group of heme A. The protein is Heme A synthase of Brucella abortus (strain S19).